A 523-amino-acid chain; its full sequence is 2-isopropylmalate synthase (523 aa).

Positions 5–267 (VIIFDTTLRD…ETGINAKEIH (263 aa)) constitute a Pyruvate carboxyltransferase domain. 4 residues coordinate Mn(2+): aspartate 14, histidine 202, histidine 204, and asparagine 238. The segment at 392–523 (KLQQLVVHSD…QQEKQVLGGV (132 aa)) is regulatory domain.

The protein belongs to the alpha-IPM synthase/homocitrate synthase family. LeuA type 1 subfamily. In terms of assembly, homodimer. It depends on Mn(2+) as a cofactor.

It is found in the cytoplasm. It carries out the reaction 3-methyl-2-oxobutanoate + acetyl-CoA + H2O = (2S)-2-isopropylmalate + CoA + H(+). It functions in the pathway amino-acid biosynthesis; L-leucine biosynthesis; L-leucine from 3-methyl-2-oxobutanoate: step 1/4. Its function is as follows. Catalyzes the condensation of the acetyl group of acetyl-CoA with 3-methyl-2-oxobutanoate (2-ketoisovalerate) to form 3-carboxy-3-hydroxy-4-methylpentanoate (2-isopropylmalate). This is 2-isopropylmalate synthase from Shewanella piezotolerans (strain WP3 / JCM 13877).